A 498-amino-acid chain; its full sequence is Oligopeptide transport system permease protein AmiC (498 aa).

6 helical membrane passes run Ser12–Pro32, Met279–Val299, Leu316–Val336, Ser359–Ile379, Met415–Leu435, and Val461–Ile481. An ABC transmembrane type-1 domain is found at Ile280–Gly479.

The protein belongs to the binding-protein-dependent transport system permease family. OppBC subfamily.

The protein localises to the cell membrane. Functionally, part of the binding-protein-dependent transport system for oligopeptides; probably responsible for the translocation of the substrate across the membrane. In Streptococcus pneumoniae serotype 4 (strain ATCC BAA-334 / TIGR4), this protein is Oligopeptide transport system permease protein AmiC (amiC).